A 206-amino-acid polypeptide reads, in one-letter code: High frequency lysogenization protein HflD homolog (206 aa).

It belongs to the HflD family.

It localises to the cytoplasm. Its subcellular location is the cell inner membrane. The chain is High frequency lysogenization protein HflD homolog from Idiomarina loihiensis (strain ATCC BAA-735 / DSM 15497 / L2-TR).